Reading from the N-terminus, the 471-residue chain is MRPQVVGAILRSRAVVSRQPLSRTHIFAAVTVAKSSSPAQNSRRTFSSSFRRLYEPKAEITAEGLELSPPQAVTGGKRTVLPNFWLRDNCRCTKCVNQDTLQRNFNTFAIPSDIHPTKVEATKENVTVQWSDNHTSTYPWPFLSFYLTSNARGHENDQISLWGSEAGSRPPTVSFPRVMASDQGVADLTAMIKEFGFCFVKDTPHDDPDVTRQLLERIAFIRVTHYGGFYDFTPDLAMADTAYTNLALPAHTDTTYFTDPAGLQAFHLLEHKAAPSRPPPPPPPPPPPSEEKEAAGSAAGEAAAAAEGGKSLLVDGFNAARILKEEDPRAYEILSSVRLPWHASGNEGITIAPDKLYPVLELNEDTGELHRVRWNNDDRGVVPFGEKYSPSEWYEAARKWDGILRRKSSELWVQLEPGKPLIFDNWRVLHGRSAFSGIRRICGGYINRDDFISRWRNTNYPRSEVLPRVTG.

Residues histidine 251 and aspartate 253 each contribute to the Fe cation site. Residues 272–302 (KAAPSRPPPPPPPPPPPSEEKEAAGSAAGEA) are disordered. Over residues 276 to 288 (SRPPPPPPPPPPP) the composition is skewed to pro residues. A Fe cation-binding site is contributed by histidine 430.

The protein belongs to the gamma-BBH/TMLD family. The cofactor is Fe(2+). L-ascorbate is required as a cofactor.

Its subcellular location is the cytoplasm. The enzyme catalyses N(6),N(6),N(6)-trimethyl-L-lysine + 2-oxoglutarate + O2 = (3S)-3-hydroxy-N(6),N(6),N(6)-trimethyl-L-lysine + succinate + CO2. The protein operates within amine and polyamine biosynthesis; carnitine biosynthesis. In terms of biological role, converts trimethyllysine (TML) into hydroxytrimethyllysine (HTML). In Neurospora crassa (strain ATCC 24698 / 74-OR23-1A / CBS 708.71 / DSM 1257 / FGSC 987), this protein is Trimethyllysine dioxygenase (cbs-1).